We begin with the raw amino-acid sequence, 455 residues long: GTPase Der (455 aa).

EngA-type G domains are found at residues 4–169 (PIVA…PKDQ) and 178–355 (LRVS…GQHQ). Residues 10–17 (GRPNVGKS), 57–61 (DTGGL), 120–123 (NKLE), 184–191 (GRPNVGKS), 233–237 (DTAGI), and 298–301 (NKWD) each bind GTP. Positions 356 to 441 (RRVSTSVLNE…PVRFIFRGKP (86 aa)) constitute a KH-like domain.

Belongs to the TRAFAC class TrmE-Era-EngA-EngB-Septin-like GTPase superfamily. EngA (Der) GTPase family. As to quaternary structure, associates with the 50S ribosomal subunit.

In terms of biological role, GTPase that plays an essential role in the late steps of ribosome biogenesis. The chain is GTPase Der from Gloeobacter violaceus (strain ATCC 29082 / PCC 7421).